Consider the following 214-residue polypeptide: Pyridoxine/pyridoxamine 5'-phosphate oxidase (214 aa).

Substrate contacts are provided by residues 8 to 11 (RKSY) and K67. Residues 62 to 67 (RVVLLK), 77 to 78 (YT), K84, and Q106 each bind FMN. Residues Y124, R128, and S132 each coordinate substrate. FMN is bound by residues 141 to 142 (QS) and W186. 192 to 194 (RLH) lines the substrate pocket. R196 serves as a coordination point for FMN.

Belongs to the pyridoxamine 5'-phosphate oxidase family. As to quaternary structure, homodimer. FMN is required as a cofactor.

The catalysed reaction is pyridoxamine 5'-phosphate + O2 + H2O = pyridoxal 5'-phosphate + H2O2 + NH4(+). It catalyses the reaction pyridoxine 5'-phosphate + O2 = pyridoxal 5'-phosphate + H2O2. The protein operates within cofactor metabolism; pyridoxal 5'-phosphate salvage; pyridoxal 5'-phosphate from pyridoxamine 5'-phosphate: step 1/1. It participates in cofactor metabolism; pyridoxal 5'-phosphate salvage; pyridoxal 5'-phosphate from pyridoxine 5'-phosphate: step 1/1. Catalyzes the oxidation of either pyridoxine 5'-phosphate (PNP) or pyridoxamine 5'-phosphate (PMP) into pyridoxal 5'-phosphate (PLP). In Flavobacterium psychrophilum (strain ATCC 49511 / DSM 21280 / CIP 103535 / JIP02/86), this protein is Pyridoxine/pyridoxamine 5'-phosphate oxidase.